We begin with the raw amino-acid sequence, 525 residues long: Peptide chain release factor 3 (525 aa).

In terms of domain architecture, tr-type G spans 9–276 (AKRRTFAIIS…GFTRYAPAPQ (268 aa)). GTP is bound by residues 18-25 (SHPDAGKT), 86-90 (DTPGH), and 140-143 (NKFD).

This sequence belongs to the TRAFAC class translation factor GTPase superfamily. Classic translation factor GTPase family. PrfC subfamily.

It localises to the cytoplasm. Functionally, increases the formation of ribosomal termination complexes and stimulates activities of RF-1 and RF-2. It binds guanine nucleotides and has strong preference for UGA stop codons. It may interact directly with the ribosome. The stimulation of RF-1 and RF-2 is significantly reduced by GTP and GDP, but not by GMP. This Francisella tularensis subsp. holarctica (strain FTNF002-00 / FTA) protein is Peptide chain release factor 3.